Consider the following 469-residue polypeptide: Glutamate--tRNA ligase (469 aa).

A 'HIGH' region motif is present at residues 9–19 (PSPTGFLHVGG). Positions 98, 100, 125, and 127 each coordinate Zn(2+). The 'KMSKS' region signature appears at 236-240 (KLSKR). Position 239 (Lys-239) interacts with ATP.

The protein belongs to the class-I aminoacyl-tRNA synthetase family. Glutamate--tRNA ligase type 1 subfamily. As to quaternary structure, monomer. Zn(2+) is required as a cofactor.

Its subcellular location is the cytoplasm. The catalysed reaction is tRNA(Glu) + L-glutamate + ATP = L-glutamyl-tRNA(Glu) + AMP + diphosphate. Catalyzes the attachment of glutamate to tRNA(Glu) in a two-step reaction: glutamate is first activated by ATP to form Glu-AMP and then transferred to the acceptor end of tRNA(Glu). This is Glutamate--tRNA ligase from Shewanella halifaxensis (strain HAW-EB4).